The chain runs to 1066 residues: Phosphatidylinositol 4-kinase PIK1 (1066 aa).

Positions 1–133 (MHKASSSKKS…GFQVARRVLN (133 aa)) constitute a PIK helical domain. A phosphoserine mark is found at S10 and S236. Disordered stretches follow at residues 218–240 (KKTS…PIDL), 303–411 (DGKN…KKAN), and 564–624 (NENR…LGDM). Over residues 342-356 (NNEDETGGETEEDAD) the composition is skewed to acidic residues. Polar residues-rich tracts occupy residues 374-411 (QPRT…KKAN) and 570-597 (STLT…NEGL). S384 bears the Phosphoserine mark. T394 is subject to Phosphothreonine. Phosphoserine is present on residues S396 and S592. Over residues 598–609 (SSTSRSDSASTA) the composition is skewed to low complexity. Residues 770–1049 (ATKKERIRKT…FLIGKSLGSI (280 aa)) form the PI3K/PI4K catalytic domain. The tract at residues 776–782 (IRKTSEY) is G-loop. Residues 915–923 (QVKDRHNGN) form a catalytic loop region. The interval 934–958 (HIDFGFMLSNSPGSVGFEAAPFKLT) is activation loop.

This sequence belongs to the PI3/PI4-kinase family. Type III PI4K subfamily. Interacts with FRQ1.

The protein localises to the nucleus. It is found in the golgi apparatus. The protein resides in the trans-Golgi network. The catalysed reaction is a 1,2-diacyl-sn-glycero-3-phospho-(1D-myo-inositol) + ATP = a 1,2-diacyl-sn-glycero-3-phospho-(1D-myo-inositol 4-phosphate) + ADP + H(+). Its function is as follows. Acts on phosphatidylinositol (PI) in the first committed step in the production of the second messenger inositol 1,4,5,-trisphosphate. PIK1 is part of a nuclear phosphoinositide cycle and could control cytokinesis through the actin cytoskeleton. Involved in the response to mating pheromone. The polypeptide is Phosphatidylinositol 4-kinase PIK1 (Saccharomyces cerevisiae (strain ATCC 204508 / S288c) (Baker's yeast)).